A 394-amino-acid polypeptide reads, in one-letter code: Elongation factor Tu 2 (394 aa).

In terms of domain architecture, tr-type G spans 10 to 204 (KPHVNVGTIG…ALDSYIPEPE (195 aa)). Positions 19–26 (GHVDHGKT) are G1. Residue 19–26 (GHVDHGKT) participates in GTP binding. Threonine 26 lines the Mg(2+) pocket. A G2 region spans residues 60–64 (GITIS). Positions 81-84 (DCPG) are G3. GTP contacts are provided by residues 81–85 (DCPGH) and 136–139 (NKCD). Residues 136-139 (NKCD) are G4. A G5 region spans residues 174-176 (SAL).

This sequence belongs to the TRAFAC class translation factor GTPase superfamily. Classic translation factor GTPase family. EF-Tu/EF-1A subfamily. In terms of assembly, monomer.

It is found in the cytoplasm. The catalysed reaction is GTP + H2O = GDP + phosphate + H(+). Its function is as follows. GTP hydrolase that promotes the GTP-dependent binding of aminoacyl-tRNA to the A-site of ribosomes during protein biosynthesis. In Pseudoalteromonas translucida (strain TAC 125), this protein is Elongation factor Tu 2.